The primary structure comprises 210 residues: Outer-membrane lipoprotein LolB (210 aa).

The N-terminal stretch at 1–19 (MNHLKSFFTALVAGFILTA) is a signal peptide. Residue Cys20 is the site of N-palmitoyl cysteine attachment. Cys20 is lipidated: S-diacylglycerol cysteine.

The protein belongs to the LolB family. As to quaternary structure, monomer.

It is found in the cell outer membrane. Its function is as follows. Plays a critical role in the incorporation of lipoproteins in the outer membrane after they are released by the LolA protein. The protein is Outer-membrane lipoprotein LolB of Mannheimia succiniciproducens (strain KCTC 0769BP / MBEL55E).